The following is an 835-amino-acid chain: MKVLALRHSVAQVYADTQIYIHDETKDDYENAFFISNLTTHNILYLNYSVKTLQILNKSGIAAVEIQKMDKLFTLIRCNFTYDYIDDVVYLHDYSYYTNNEIRTDQHWVTKTNIEDYLLPGWKLTYVGYNGNDTRGHYNFSFKCQNAATDDDAIIEYIYSNELDFQNFILKKIKERMTTSLPIARLSNRVFRDKLFKTLVSDHSKIVNVGPRNESMFTFLDHPSIKQFSNGPYLVKDTIKLKQERWLGKRLSQFDIGQYKNYVKCINNLISIYDMYHEKPIIYMLGSAPSYWIHDVKQYSNLKFETWDPLDTPYSDLHHKELFYISDVTKLKDNSILYIDIRTDRENADWKTWRKIVEEQTVNNLNIAYKYLSTGKAKVCCVKMTAMDLELPISAKLLHHPTTEIRSEFYLIMDIWDSKNIKRFIPKGVLYSYINNIITENVFIQQPFKLKTLRNEYVVALYALSNDFNNREDVIKLINNQKNALITVRINNTFKDEPKVGFKDIYDWTFLPTDFETNESIITSYDGCLGVFGLSISLASKPTGNNHLFMLSGTNKYFNMDQFANHMSISRRSHQIRFSESATSYSGYIFRDLSNNNFNLIGTNVENSVSGHVYNALIYYRYNYSFDLKRWIYLHSTNKASIEGGRYYEHAPIELIYACRSAREFAKLQDDLTVLRYSNEIENYINKVYSITYADDPNYFIGIKFKNIPYEYDVKVPHLTFGVLNISDSMVPDVVVILKKFKSELFRMDVTTSYTYMLSDEIYVANVSGVLSTYFKLYNAFYKEQITFGQSRMFIPHITLSFSNKKVVRIDSTRLNIDFIYLRKIKGDTVFDMAE.

The segment at Lys171–Arg245 is N7-methyltransferase activity. Residues Trp246 to Gly428 form a 2'-O-methyltransferase activity region. Residues Val429–Asn555 are N7-methyltransferase activity. The tract at residues Lys556–Thr692 is GTase/RTPase activity. The 2'-5'-phosphodiesterase activity stretch occupies residues Tyr693–Glu835. Residues His718, Thr720, His797, and Thr799 each act as for 2'-5'-phosphodiesterase activity in the active site.

It belongs to the rotavirus VP3 family. Interacts with VP1. Interacts with VP2.

Its subcellular location is the virion. The enzyme catalyses a 5'-end diphospho-ribonucleoside in mRNA + GTP + H(+) = a 5'-end (5'-triphosphoguanosine)-ribonucleoside in mRNA + diphosphate. The catalysed reaction is a 5'-end (5'-triphosphoguanosine)-ribonucleoside in mRNA + S-adenosyl-L-methionine = a 5'-end (N(7)-methyl 5'-triphosphoguanosine)-ribonucleoside in mRNA + S-adenosyl-L-homocysteine. It carries out the reaction 5'-triphosphoadenylyl-(2'-&gt;5')-adenylyl-(2'-&gt;5')-adenosine + 2 H2O = 2 AMP + ATP + 2 H(+). In terms of biological role, multifunctional enzyme involved in mRNA capping. Catalyzes the formation of the 5' cap structure on the viral plus-strand transcripts. Specifically binds to GTP and displays guanylyltransferase and methyltransferase activities. Has affinity for ssRNA but not for dsRNA. Capping activity is non-specific and caps RNAs that initiate with either a G or an A residue. Together with VP1 polymerase, forms a VP1-VP3 complex positioned near the channels situated at each of the five-fold vertices of the core. Following infection, the outermost layer of the virus is lost, leaving a double-layered particle (DLP) made up of the core and VP6 shell. VP1 then catalyzes the transcription of fully conservative plus-strand genomic RNAs that are capped by VP3 and extruded through the DLP's channels into the cytoplasm where they function as mRNAs for translation of viral proteins. DLPs probably have an RNA triphosphatase activity as well, whereas open cores do not. Functionally, counteracts the host innate immune response thanks to its phosphodiesterase that degrades the 5'-triphosphorylated, 2'-5' linked adenylate oligomers produced by the host cell IFN-inducible 2',5'-oligoadenylate synthetase (OAS). The host RNaseL is therefore not activated. The protein is Protein VP3 of Rotavirus A (strain RVA/Cow/United Kingdom/UK/1975/G6P7[5]) (RV-A).